A 518-amino-acid chain; its full sequence is MQLLGTLSWLYAIQASIGSSKAVTADYGSCHDACTLLSGTLSVELGGSHVSDYKHYPTIANGSSVASLFWAQQQQSAQPACLVHVYSPQDVATVISVSRSTNCPFAVRGGGHSDIPGASNINGGITVNMAALSNVELHESEGLARVGAGARWGDVYKELEKSNKTVVGGRLTGVGVGGLVLGGGLSHFSGLHGWACDNVRNYEVVLANGTLVIASNSSNPDLYRALRGGGNSFGVVTRFDLDVFQQGPMWGGLHVWPFQPSVTSAITRGFVEFAHNAPSDPHVSLFAGLGYKQGGFAWAVGQYDALGRVEPPIFTQFKDDVEVYGTAKIVSTARLTSLSDLADELNQSEPAGIRSRFTTATFTADAELLILIVEFFEEQVQKALDKGLDKDQRFAPMLGIQPLTQNLLRAQETRGGNVMGLRDLDAPLVVCSFGWEWSYESDDKVVIDGIKAVLDHSVSAAKEKGLYHPFKYMNYAALDQDPIESYGKENIEFLKRVRAMYDPEGVFTNLVPGGHKIN.

The first 22 residues, 1–22 (MQLLGTLSWLYAIQASIGSSKA), serve as a signal peptide directing secretion. Asn61 carries an N-linked (GlcNAc...) asparagine glycan. Positions 75-246 (QSAQPACLVH…TRFDLDVFQQ (172 aa)) constitute an FAD-binding PCMH-type domain. His112 is modified (pros-8alpha-FAD histidine). N-linked (GlcNAc...) asparagine glycosylation is found at Asn163, Asn208, Asn216, and Asn346.

The protein belongs to the oxygen-dependent FAD-linked oxidoreductase family. FAD is required as a cofactor.

It participates in secondary metabolite biosynthesis; terpenoid biosynthesis. Functionally, FAD-dependent monooxygenase; part of the gene cluster that mediates the biosynthesis of terpestacin. The bifunctional terpene synthase tpcA converts isopentenyl diphosphate (IPP) and dimethylallyl diphosphate (DMAPP) into the sesterterpene preterpestacin I. The C-terminal prenyltransferase (PT) domain of tpcA catalyzes formation of GFPP, whereas the N-terminal terpene cyclase (TC) domain catalyzes the cyclization of GFPP into preterpestacin I. The cytochrome P450 monooxygenase tpcB then hydroxylates preterpestacin I to yield 24-hydroxypreterpstacin I (renamed as preterpestacin II) whereas the cytochrome P450 monooxygenase tpcC further hydroxylates preterpestacin II to yield 16,17-dihydroxypreterpestacin II (renamed as preterpestacin III). Finally, the FAD-dependent monooxygenase tpcD converts preterpestacin III into terpestacin. In Cochliobolus heterostrophus (strain C5 / ATCC 48332 / race O) (Southern corn leaf blight fungus), this protein is FAD-dependent monooxygenase tpcD.